The chain runs to 61 residues: Conotoxin TeAr154 (61 aa).

The first 19 residues, 1–19 (MHCLPVFVILLLLTASGLS), serve as a signal peptide directing secretion. A propeptide spanning residues 20–47 (VDARPKTEDDVPLSSFRDNTKSTLQRLL) is cleaved from the precursor. Glutamate 57 bears the 4-carboxyglutamate mark.

In terms of processing, contains 2 disulfide bonds that can be either 'C1-C3, C2-C4' or 'C1-C4, C2-C3', since these disulfide connectivities have been observed for conotoxins with cysteine framework V (for examples, see AC P0DQQ7 and AC P81755). Post-translationally, contains 2 disulfide bonds. As to expression, expressed by the venom duct.

It is found in the secreted. This is Conotoxin TeAr154 from Conus textile (Cloth-of-gold cone).